An 88-amino-acid polypeptide reads, in one-letter code: Small ribosomal subunit protein uS17 (88 aa).

The protein belongs to the universal ribosomal protein uS17 family. In terms of assembly, part of the 30S ribosomal subunit.

One of the primary rRNA binding proteins, it binds specifically to the 5'-end of 16S ribosomal RNA. The protein is Small ribosomal subunit protein uS17 of Methylorubrum extorquens (strain PA1) (Methylobacterium extorquens).